Reading from the N-terminus, the 338-residue chain is Ketol-acid reductoisomerase (NADP(+)) (338 aa).

The KARI N-terminal Rossmann domain occupies 1–181 (MKVFYDKDAD…GGGRAGIIET (181 aa)). NADP(+) is bound by residues 24–27 (YGSQ), Arg47, and Ser52. His107 is an active-site residue. Gly133 is a binding site for NADP(+). In terms of domain architecture, KARI C-terminal knotted spans 182–327 (NFREETETDL…AKLRAMMPWI (146 aa)). Positions 190, 194, 226, and 230 each coordinate Mg(2+). Position 251 (Ser251) interacts with substrate.

The protein belongs to the ketol-acid reductoisomerase family. Requires Mg(2+) as cofactor.

It catalyses the reaction (2R)-2,3-dihydroxy-3-methylbutanoate + NADP(+) = (2S)-2-acetolactate + NADPH + H(+). The enzyme catalyses (2R,3R)-2,3-dihydroxy-3-methylpentanoate + NADP(+) = (S)-2-ethyl-2-hydroxy-3-oxobutanoate + NADPH + H(+). Its pathway is amino-acid biosynthesis; L-isoleucine biosynthesis; L-isoleucine from 2-oxobutanoate: step 2/4. It functions in the pathway amino-acid biosynthesis; L-valine biosynthesis; L-valine from pyruvate: step 2/4. Its function is as follows. Involved in the biosynthesis of branched-chain amino acids (BCAA). Catalyzes an alkyl-migration followed by a ketol-acid reduction of (S)-2-acetolactate (S2AL) to yield (R)-2,3-dihydroxy-isovalerate. In the isomerase reaction, S2AL is rearranged via a Mg-dependent methyl migration to produce 3-hydroxy-3-methyl-2-ketobutyrate (HMKB). In the reductase reaction, this 2-ketoacid undergoes a metal-dependent reduction by NADPH to yield (R)-2,3-dihydroxy-isovalerate. The chain is Ketol-acid reductoisomerase (NADP(+)) from Cupriavidus necator (strain ATCC 17699 / DSM 428 / KCTC 22496 / NCIMB 10442 / H16 / Stanier 337) (Ralstonia eutropha).